We begin with the raw amino-acid sequence, 510 residues long: Scarecrow-like protein 29 (510 aa).

The disordered stretch occupies residues 90 to 142 (LDLPPEIQQPNDQSRKRSHDGFLEAQQVKKSARSKRKAIKSSEKSSKDGNKEG). A compositionally biased stretch (basic and acidic residues) spans 102-111 (QSRKRSHDGF). Residues 119-128 (KSARSKRKAI) are compositionally biased toward basic residues. Over residues 129–142 (KSSEKSSKDGNKEG) the composition is skewed to basic and acidic residues. The GRAS domain maps to 136-510 (KDGNKEGRWA…EAVSFCSLWK (375 aa)). Positions 143–205 (RWAEKLLNPC…HLSSSSVSSS (63 aa)) are leucine repeat I (LRI). The VHIID stretch occupies residues 224–294 (LLKFYEVSPW…GPPPRVRITV (71 aa)). A VHIID motif is present at residues 259–263 (LHIID). Residues 312–337 (NYGSQLLGFARSLKINLQISVLDKLQ) form a leucine repeat II (LRII) region. Residues 347-435 (LIVCAQFRLH…RKLMEGEATK (89 aa)) form a PFYRE region. The SAW stretch occupies residues 438 to 510 (MNAGDMNEGK…EAVSFCSLWK (73 aa)).

Belongs to the GRAS family. Expressed in seedlings, roots and flowers.

It localises to the nucleus. Probable transcription factor involved in plant development. This is Scarecrow-like protein 29 (SCL29) from Arabidopsis thaliana (Mouse-ear cress).